Consider the following 412-residue polypeptide: NADH-quinone oxidoreductase subunit D (412 aa).

The protein belongs to the complex I 49 kDa subunit family. NDH-1 is composed of at least 14 different subunits, Nqo1 to Nqo14. The complex has a L-shaped structure, with the hydrophobic arm (subunits Nqo7, Nqo8, Nqo10 to Nqo14) embedded in the inner membrane and the hydrophilic peripheral arm (subunits Nqo1 to Nqo6, Nqo9) protruding into the bacterial cytoplasm. The hydrophilic domain contains all the redox centers. NADH-quinone oxidoreductase forms a supercomplex with ubiquinol-cytochrome c reductase complex (complex III or cytochrome b-c1 complex) and cytochrome c oxidase (complex IV), which stabilizes the NADH-quinone oxidoreductase complex.

The protein localises to the cell inner membrane. The enzyme catalyses a quinone + NADH + 5 H(+)(in) = a quinol + NAD(+) + 4 H(+)(out). In terms of biological role, NDH-1 shuttles electrons from NADH, via FMN and iron-sulfur (Fe-S) centers, to quinones in the respiratory chain. The immediate electron acceptor for the enzyme in this species is believed to be ubiquinone. Couples the redox reaction to proton translocation (for every two electrons transferred, four hydrogen ions are translocated across the cytoplasmic membrane), and thus conserves the redox energy in a proton gradient. This chain is NADH-quinone oxidoreductase subunit D (nuoD), found in Paracoccus denitrificans (strain Pd 1222).